The chain runs to 410 residues: Lysosome-associated membrane glycoprotein 2 (410 aa).

Residues 1-28 (MVCFRLFPVPGSGLVLVCLVLGAVRSYA) form the signal peptide. Residues 29-192 (LELNLTDSEN…STNEFLCDKD (164 aa)) form a first lumenal domain region. Topologically, residues 29-375 (LELNLTDSEN…QDCSADDDNF (347 aa)) are lumenal. N-linked (GlcNAc...) (polylactosaminoglycan) asparagine glycosylation is found at Asn32 and Asn38. Cys41 and Cys79 are disulfide-bonded. N-linked (GlcNAc...) asparagine glycans are attached at residues Asn49, Asn58, Asn75, Asn101, Asn123, and Asn179. A disulfide bond links Cys153 and Cys189. The tract at residues 193–228 (KTSTVAPTIHTTVPSPTTTPTPKEKPEAGTYSVNNG) is hinge. Ser195 carries O-linked (GalNAc...) serine glycosylation. Thr196, Thr200, Thr203, and Thr204 each carry an O-linked (GalNAc...) threonine glycan. Low complexity predominate over residues 199–213 (PTIHTTVPSPTTTPT). Residues 199–221 (PTIHTTVPSPTTTPTPKEKPEAG) form a disordered region. An O-linked (GalNAc...) serine; partial glycan is attached at Ser207. Thr209 is a glycosylation site (O-linked (GalNAc...) threonine; partial). Residues Thr210 and Thr211 are each glycosylated (O-linked (GalNAc...) threonine). O-linked (GalNAc...) threonine; partial glycosylation is present at Thr213. 5 N-linked (GlcNAc...) asparagine glycosylation sites follow: Asn229, Asn242, Asn257, Asn275, and Asn300. Residues 229–375 (NDTCLLATMG…QDCSADDDNF (147 aa)) are second lumenal domain. The cysteines at positions 232 and 265 are disulfide-linked. The N-linked (GlcNAc...) (polylactosaminoglycan) asparagine glycan is linked to Asn307. Asn317 and Asn356 each carry an N-linked (GlcNAc...) asparagine glycan. Cysteines 331 and 368 form a disulfide. The chain crosses the membrane as a helical span at residues 376–399 (LVPIAVGAALAGVLILVLLAYFIG). Residues 400–410 (LKHHHAGYEQF) are Cytoplasmic-facing. The segment at 401 to 404 (KHHH) is important for binding and subsequent lysosomal degradation of target proteins.

It belongs to the LAMP family. Monomer. Homodimer. Homotrimer. Forms large homooligomers. Interacts (via its cytoplasmic region) with HSPA8; HSPA8 mediates recruitment of proteins with a KFERQ motif to the surface of the lysosome for chaperone-mediated autophagy. Interacts with HSP90 in the lysosome lumen; this enhances LAMP2 stability. Interacts with MLLT11. Interacts with ABCB9. Interacts with FURIN. Interacts with CT55; this interaction may be important for LAMP2 protein stability. Interacts with TMEM175; inhibiting the proton channel activity of TMEM175. Forms a ternary complex with RAB7A and RUFY4 (via RUN domain); the interaction with RAB7A is mediated by RUFY4 (via RUN and coiled coil domains). As to quaternary structure, (Microbial infection) Interacts with mumps virus protein F; this interaction promotes protein F cleavage by FURIN. In terms of processing, O- and N-glycosylated; some of the 16 N-linked glycans are polylactosaminoglycans. In terms of tissue distribution, isoform LAMP-2A is highly expressed in placenta, lung and liver, less in kidney and pancreas, low in brain and skeletal muscle. Isoform LAMP-2B is detected in spleen, thymus, prostate, testis, small intestine, colon, skeletal muscle, brain, placenta, lung, kidney, ovary and pancreas and liver. Isoform LAMP-2C is detected in small intestine, colon, heart, brain, skeletal muscle, and at lower levels in kidney and placenta.

The protein resides in the lysosome membrane. Its subcellular location is the endosome membrane. It localises to the cell membrane. It is found in the cytoplasmic vesicle. The protein localises to the autophagosome membrane. In terms of biological role, lysosomal membrane glycoprotein which plays an important role in lysosome biogenesis, lysosomal pH regulation and autophagy. Acts as an important regulator of lysosomal lumen pH regulation by acting as a direct inhibitor of the proton channel TMEM175, facilitating lysosomal acidification for optimal hydrolase activity. Plays an important role in chaperone-mediated autophagy, a process that mediates lysosomal degradation of proteins in response to various stresses and as part of the normal turnover of proteins with a long biological half-live. Functions by binding target proteins, such as GAPDH, NLRP3 and MLLT11, and targeting them for lysosomal degradation. In the chaperone-mediated autophagy, acts downstream of chaperones, such as HSPA8/HSC70, which recognize and bind substrate proteins and mediate their recruitment to lysosomes, where target proteins bind LAMP2. Plays a role in lysosomal protein degradation in response to starvation. Required for the fusion of autophagosomes with lysosomes during autophagy. Cells that lack LAMP2 express normal levels of VAMP8, but fail to accumulate STX17 on autophagosomes, which is the most likely explanation for the lack of fusion between autophagosomes and lysosomes. Required for normal degradation of the contents of autophagosomes. Required for efficient MHC class II-mediated presentation of exogenous antigens via its function in lysosomal protein degradation; antigenic peptides generated by proteases in the endosomal/lysosomal compartment are captured by nascent MHC II subunits. Is not required for efficient MHC class II-mediated presentation of endogenous antigens. Its function is as follows. Modulates chaperone-mediated autophagy. Decreases presentation of endogenous antigens by MHCII. Does not play a role in the presentation of exogenous and membrane-derived antigens by MHCII. Functionally, (Microbial infection) Supports the FURIN-mediated cleavage of mumps virus fusion protein F by interacting with both FURIN and the unprocessed form but not the processed form of the viral protein F. This chain is Lysosome-associated membrane glycoprotein 2 (LAMP2), found in Homo sapiens (Human).